The chain runs to 315 residues: Serpentine receptor class delta-31 (315 aa).

7 helical membrane-spanning segments follow: residues 6–26 (LHSI…YLAI), 38–58 (AIIT…FFVM), 83–103 (ACYV…IWMI), 124–144 (VFVA…WFSI), 174–194 (ITLI…YIWI), 225–245 (FQVF…SMFT), and 256–276 (AISV…ILFV).

It belongs to the nematode receptor-like protein srd family.

It localises to the membrane. The sequence is that of Serpentine receptor class delta-31 (srd-31) from Caenorhabditis elegans.